The following is a 122-amino-acid chain: Basic phospholipase A2 LmTX-II (122 aa).

Intrachain disulfides connect Cys26/Cys115, Cys28/Cys44, Cys43/Cys95, Cys49/Cys122, Cys50/Cys88, and Cys75/Cys86. Residues Tyr27, Gly29, and Gly31 each contribute to the Ca(2+) site. His47 is an active-site residue. Asp48 serves as a coordination point for Ca(2+). Residue Asp89 is part of the active site.

Monomer. The cofactor is Ca(2+). As to expression, expressed by the venom gland.

The protein resides in the secreted. The enzyme catalyses a 1,2-diacyl-sn-glycero-3-phosphocholine + H2O = a 1-acyl-sn-glycero-3-phosphocholine + a fatty acid + H(+). Its function is as follows. Snake venom phospholipase A2 (PLA2) that may display neurotoxic and myotoxic activities. May induce inflammatory edema by mechanisms involving mast cell activation and arachidonic acid metabolites. May increase plasma creatine kinase activity. PLA2 catalyzes the calcium-dependent hydrolysis of the 2-acyl groups in 3-sn-phosphoglycerides. The polypeptide is Basic phospholipase A2 LmTX-II (Lachesis muta muta (Bushmaster)).